The primary structure comprises 500 residues: Flt3-interacting zinc finger protein 1 (500 aa).

At methionine 1 the chain carries N-acetylmethionine. Residues 1–24 form a disordered region; sequence MEDSSLPVVPAPIAAPGPAPSATA. Pro residues predominate over residues 9 to 19; that stretch reads VPAPIAAPGPA. 6 consecutive C2H2-type zinc fingers follow at residues 29–51, 57–79, 85–107, 113–136, 204–226, and 232–254; these read FHCS…FARH, HACP…LRSH, YRCS…QVVH, YCCL…KRQH, FACG…WAAH, and FKCP…KLTH. 2 disordered regions span residues 255–284 and 306–328; these read DLQG…ASEV and KLEA…AAAE. Residues 256–267 show a composition bias toward polar residues; the sequence is LQGSNAPPTQVW. C2H2-type zinc fingers lie at residues 336-357, 363-386, 418-440, 446-468, and 474-496; these read YQCD…LEAH, YGCG…RASH, FGCS…VLVH, FPCL…RLLH, and FPCH…LKLH. The tract at residues 383 to 415 is disordered; sequence RASHGEGSGEAAPDGEGNQAAGGPGPGSSSRSK.

In terms of assembly, interacts with FLT3 cytoplasmic catalytic domain, following receptor stimulation, in a kinase-independent manner. Does not interact with other structurally related receptor tyrosine kinases, including KIT, CSF1R and PDGFR. Interacts with NRL. As to expression, widely expressed. In the retina, highest expression in the ganglion cell layer.

The protein resides in the cytoplasm. It localises to the nucleus. May be a transcriptional repressor of NRL function in photoreceptors. Does not repress CRX-mediated transactivation. The chain is Flt3-interacting zinc finger protein 1 (Fiz1) from Mus musculus (Mouse).